Reading from the N-terminus, the 382-residue chain is Beta-lactamase CMY-10 (382 aa).

Positions 1–23 are cleaved as a signal peptide; the sequence is MQQRQSILWGAVATLMWAGLAHA. Catalysis depends on S88, which acts as the Acyl-ester intermediate. S88 contributes to the AMP binding site. GMP-binding residues include S88, Q144, Y174, T336, S338, and N363. IMP-binding residues include S88, Q144, Y174, T336, S338, and N363. Residue Y174 participates in AMP binding. Residue S338 coordinates AMP.

It belongs to the class-C beta-lactamase family. In terms of assembly, monomer.

It carries out the reaction a beta-lactam + H2O = a substituted beta-amino acid. Inhibited by various nucleotides in vitro, including adenosine 5'-(P-acetyl)monophosphate (acAMP), inosine-5'-monophosphate (IMP) and guanosine-5'-monophosphate (GMP); IMP and GMP exhibit strongest competitive inhibition. Inhibited by the beta-lactamase-blocking agent, avibactam. Inhibited by clavulanic acid. Weakly inhibited by citric acid. In terms of biological role, class C beta-lactamase which confers resistance to penicillins and cephalosporins. Has benzylpenicillin-, ceftazidime-, nitrocefin- and imipenem-hydrolyzing activity. This Klebsiella aerogenes (Enterobacter aerogenes) protein is Beta-lactamase CMY-10.